Reading from the N-terminus, the 189-residue chain is Large ribosomal subunit protein bL9 (189 aa).

Belongs to the bacterial ribosomal protein bL9 family.

In terms of biological role, binds to the 23S rRNA. This Cereibacter sphaeroides (strain ATCC 17025 / ATH 2.4.3) (Rhodobacter sphaeroides) protein is Large ribosomal subunit protein bL9.